The primary structure comprises 66 residues: Large ribosomal subunit protein uL29 (66 aa).

It belongs to the universal ribosomal protein uL29 family.

This is Large ribosomal subunit protein uL29 from Methylibium petroleiphilum (strain ATCC BAA-1232 / LMG 22953 / PM1).